The primary structure comprises 91 residues: Small ribosomal subunit protein bS20 (91 aa).

Belongs to the bacterial ribosomal protein bS20 family.

In terms of biological role, binds directly to 16S ribosomal RNA. This chain is Small ribosomal subunit protein bS20, found in Caulobacter vibrioides (strain ATCC 19089 / CIP 103742 / CB 15) (Caulobacter crescentus).